We begin with the raw amino-acid sequence, 525 residues long: Coronin-2A (525 aa).

7 WD repeats span residues Asn-24–Leu-71, Asp-72–Thr-122, Ala-123–Thr-170, Ser-171–Val-214, Leu-215–Ser-259, Val-260–Pro-305, and His-306–Lys-342. A coiled-coil region spans residues Gln-485 to Gln-524.

This sequence belongs to the WD repeat coronin family. As to quaternary structure, binds actin. Component of the N-Cor repressor complex, at least composed of NCOR1, NCOR2, HDAC3, TBL1X, TBL1R, CORO2A and GPS2.

The sequence is that of Coronin-2A (CORO2A) from Homo sapiens (Human).